The sequence spans 542 residues: CTP synthase (542 aa).

An amidoligase domain region spans residues methionine 1–leucine 264. Serine 12 lines the CTP pocket. Serine 12 is a binding site for UTP. Serine 13–isoleucine 18 is a binding site for ATP. Residue tyrosine 53 participates in L-glutamine binding. Aspartate 70 provides a ligand contact to ATP. Mg(2+) contacts are provided by aspartate 70 and glutamate 138. CTP-binding positions include aspartate 145–glutamate 147, lysine 185–glutamine 190, and lysine 221. UTP-binding positions include lysine 185 to glutamine 190 and lysine 221. Lysine 237–alanine 239 is an ATP binding site. One can recognise a Glutamine amidotransferase type-1 domain in the interval tyrosine 298 to lysine 541. L-glutamine is bound at residue glycine 359. The Nucleophile; for glutamine hydrolysis role is filled by cysteine 386. L-glutamine is bound by residues leucine 387–glutamine 390, glutamate 410, and arginine 467. Catalysis depends on residues histidine 514 and glutamate 516.

Belongs to the CTP synthase family. As to quaternary structure, homotetramer.

It carries out the reaction UTP + L-glutamine + ATP + H2O = CTP + L-glutamate + ADP + phosphate + 2 H(+). It catalyses the reaction L-glutamine + H2O = L-glutamate + NH4(+). The catalysed reaction is UTP + NH4(+) + ATP = CTP + ADP + phosphate + 2 H(+). The protein operates within pyrimidine metabolism; CTP biosynthesis via de novo pathway; CTP from UDP: step 2/2. Allosterically activated by GTP, when glutamine is the substrate; GTP has no effect on the reaction when ammonia is the substrate. The allosteric effector GTP functions by stabilizing the protein conformation that binds the tetrahedral intermediate(s) formed during glutamine hydrolysis. Inhibited by the product CTP, via allosteric rather than competitive inhibition. In terms of biological role, catalyzes the ATP-dependent amination of UTP to CTP with either L-glutamine or ammonia as the source of nitrogen. Regulates intracellular CTP levels through interactions with the four ribonucleotide triphosphates. The chain is CTP synthase from Methanococcus aeolicus (strain ATCC BAA-1280 / DSM 17508 / OCM 812 / Nankai-3).